The sequence spans 406 residues: Endoglucanase 1 (406 aa).

The signal sequence occupies residues 1 to 43 (MNSKKIGAMIAAAVLSLIVMTPAATRKIVQRQTRNSSTAVENS). Composition is skewed to polar residues over residues 30–41 (QRQTRNSSTAVE) and 51–62 (ENVPVSQTHTND). The tract at residues 30–62 (QRQTRNSSTAVENSAADESETENVPVSQTHTND) is disordered. Residue E210 is the Proton donor of the active site. Residue E330 is the Nucleophile of the active site.

The protein belongs to the glycosyl hydrolase 5 (cellulase A) family.

The catalysed reaction is Endohydrolysis of (1-&gt;4)-beta-D-glucosidic linkages in cellulose, lichenin and cereal beta-D-glucans.. This is Endoglucanase 1 (Eg I) from Ruminococcus albus.